Here is a 967-residue protein sequence, read N- to C-terminus: Protein moonraker (967 aa).

The segment at 178–201 (SHPGQSDLTVPNSPPTHDPGLQPH) is disordered. Over residues 179–188 (HPGQSDLTVP) the composition is skewed to polar residues. 2 positions are modified to phosphoserine: serine 287 and serine 409. Disordered regions lie at residues 401–431 (ALER…SRPS) and 490–601 (KAGK…SHLT). The span at 525–543 (QSQPHSKSRVQQTTVSSRL) shows a compositional bias: polar residues. The span at 557–568 (WIPPNPTSPPAS) shows a compositional bias: pro residues. Residues 616 to 642 (AETSKRLKELEELKAKEIDSMQKQRLD) adopt a coiled-coil conformation. A phosphoserine mark is found at serine 700 and serine 826. The segment at 849–872 (RPCNGNSLDESVGTEEGSEKREAP) is disordered. The tract at residues 885-967 (GRAPLFVPPG…FTSEFLEAAT (83 aa)) is necessary and sufficient for CEP20-binding.

Interacts with CEP63. Interacts with WDR62. Forms a complex with OFD1 and CEP20/FOR20. Interacts with PCM1.

It localises to the cytoplasm. The protein localises to the cytoskeleton. The protein resides in the microtubule organizing center. It is found in the centrosome. Its subcellular location is the centriole. It localises to the centriolar satellite. Involved in centriole duplication. Positively regulates CEP63 centrosomal localization. Required for WDR62 centrosomal localization and promotes the centrosomal localization of CDK2. May play a role in cilium assembly. The sequence is that of Protein moonraker (KIAA0753) from Homo sapiens (Human).